We begin with the raw amino-acid sequence, 518 residues long: U-box domain-containing protein 57 (518 aa).

Residues 86–142 are a coiled coil; sequence EEVRKVHILEEEIVTLKHQADTYLVQKEKAVTAYDQLKHERDNAVQQVNELRDQSTH. The 251-residue stretch at 159–409 folds into the Protein kinase domain; it reads FKNAREVGDT…RPDLLNEVWI (251 aa). The U-box domain maps to 434–508; the sequence is SVPAAFICPI…HGYLQQQQPN (75 aa).

It carries out the reaction S-ubiquitinyl-[E2 ubiquitin-conjugating enzyme]-L-cysteine + [acceptor protein]-L-lysine = [E2 ubiquitin-conjugating enzyme]-L-cysteine + N(6)-ubiquitinyl-[acceptor protein]-L-lysine.. The protein operates within protein modification; protein ubiquitination. In terms of biological role, possesses E3 ubiquitin-protein ligase in vitro. May be involved in cell death signaling. This chain is U-box domain-containing protein 57 (PUB57), found in Oryza sativa subsp. japonica (Rice).